Here is a 327-residue protein sequence, read N- to C-terminus: Nucleotide-binding protein Mflv_3714 (327 aa).

Residues 1-22 (MTRQGMRDDLRGEADSVVHDGT) are compositionally biased toward basic and acidic residues. The disordered stretch occupies residues 1–29 (MTRQGMRDDLRGEADSVVHDGTDDIDNEN). Position 50 to 57 (50 to 57 (GLSGAGRG)) interacts with ATP. 101–104 (DVRS) serves as a coordination point for GTP.

Belongs to the RapZ-like family.

Its function is as follows. Displays ATPase and GTPase activities. This chain is Nucleotide-binding protein Mflv_3714, found in Mycolicibacterium gilvum (strain PYR-GCK) (Mycobacterium gilvum (strain PYR-GCK)).